The sequence spans 369 residues: Succinyl-diaminopimelate desuccinylase (369 aa).

Histidine 77 is a Zn(2+) binding site. Aspartate 79 is an active-site residue. Zn(2+) is bound at residue aspartate 103. Residue glutamate 136 is the Proton acceptor of the active site. Positions 137, 165, and 345 each coordinate Zn(2+).

This sequence belongs to the peptidase M20A family. Requires Zn(2+) as cofactor. Co(2+) is required as a cofactor.

It catalyses the reaction N-succinyl-(2S,6S)-2,6-diaminopimelate + H2O = (2S,6S)-2,6-diaminopimelate + succinate. The protein operates within amino-acid biosynthesis; L-lysine biosynthesis via DAP pathway; LL-2,6-diaminopimelate from (S)-tetrahydrodipicolinate (succinylase route): step 3/3. The chain is Succinyl-diaminopimelate desuccinylase (dapE) from Corynebacterium glutamicum (strain ATCC 13032 / DSM 20300 / JCM 1318 / BCRC 11384 / CCUG 27702 / LMG 3730 / NBRC 12168 / NCIMB 10025 / NRRL B-2784 / 534).